The primary structure comprises 179 residues: UPF0227 protein Shewmr4_1727 (179 aa).

It belongs to the UPF0227 family.

In Shewanella sp. (strain MR-4), this protein is UPF0227 protein Shewmr4_1727.